The chain runs to 261 residues: Phosphatidylglycerol--prolipoprotein diacylglyceryl transferase (261 aa).

4 helical membrane-spanning segments follow: residues 17 to 37, 59 to 79, 94 to 114, and 121 to 141; these read FAIH…LLLG, LLFA…TLFY, IWEG…ALLW, and TSFF…LAFG. A 1,2-diacyl-sn-glycero-3-phospho-(1'-sn-glycerol) is bound at residue arginine 142. 2 consecutive transmembrane segments (helical) span residues 174 to 194 and 228 to 248; these read PSQI…LWIY and FLGL…PMII.

Belongs to the Lgt family.

Its subcellular location is the cell inner membrane. The catalysed reaction is L-cysteinyl-[prolipoprotein] + a 1,2-diacyl-sn-glycero-3-phospho-(1'-sn-glycerol) = an S-1,2-diacyl-sn-glyceryl-L-cysteinyl-[prolipoprotein] + sn-glycerol 1-phosphate + H(+). The protein operates within protein modification; lipoprotein biosynthesis (diacylglyceryl transfer). In terms of biological role, catalyzes the transfer of the diacylglyceryl group from phosphatidylglycerol to the sulfhydryl group of the N-terminal cysteine of a prolipoprotein, the first step in the formation of mature lipoproteins. The chain is Phosphatidylglycerol--prolipoprotein diacylglyceryl transferase from Polynucleobacter asymbioticus (strain DSM 18221 / CIP 109841 / QLW-P1DMWA-1) (Polynucleobacter necessarius subsp. asymbioticus).